A 125-amino-acid chain; its full sequence is Small ribosomal subunit protein bS6 (125 aa).

Residues 99–125 (PSIMMKSVEREEARKASTEASAPAQAQ) form a disordered region. Over residues 105 to 115 (SVEREEARKAS) the composition is skewed to basic and acidic residues. Positions 116–125 (TEASAPAQAQ) are enriched in polar residues.

This sequence belongs to the bacterial ribosomal protein bS6 family.

In terms of biological role, binds together with bS18 to 16S ribosomal RNA. The sequence is that of Small ribosomal subunit protein bS6 from Bordetella petrii (strain ATCC BAA-461 / DSM 12804 / CCUG 43448).